We begin with the raw amino-acid sequence, 327 residues long: Tryptophan--tRNA ligase (327 aa).

Residues 9-11 (QPS) and 17-18 (GN) contribute to the ATP site. The 'HIGH' region signature appears at 10–18 (PSGDIHIGN). An L-tryptophan-binding site is contributed by D132. ATP contacts are provided by residues 144–146 (GED), I183, and 192–196 (KMSKS). Residues 192–196 (KMSKS) carry the 'KMSKS' region motif.

This sequence belongs to the class-I aminoacyl-tRNA synthetase family. As to quaternary structure, homodimer.

The protein resides in the cytoplasm. It catalyses the reaction tRNA(Trp) + L-tryptophan + ATP = L-tryptophyl-tRNA(Trp) + AMP + diphosphate + H(+). Catalyzes the attachment of tryptophan to tRNA(Trp). This Caldanaerobacter subterraneus subsp. tengcongensis (strain DSM 15242 / JCM 11007 / NBRC 100824 / MB4) (Thermoanaerobacter tengcongensis) protein is Tryptophan--tRNA ligase.